The sequence spans 232 residues: Ribonuclease 3 (232 aa).

The RNase III domain occupies 9–131 (INLLQKKLGY…IIGGIFLDSN (123 aa)). E44 is a Mg(2+) binding site. The active site involves D48. Residues D117 and E120 each contribute to the Mg(2+) site. Residue E120 is part of the active site. Residues 158–228 (DPKTRLQEYL…AENALKFLIE (71 aa)) enclose the DRBM domain.

Belongs to the ribonuclease III family. In terms of assembly, homodimer. Requires Mg(2+) as cofactor.

It is found in the cytoplasm. The enzyme catalyses Endonucleolytic cleavage to 5'-phosphomonoester.. Functionally, digests double-stranded RNA. Involved in the processing of primary rRNA transcript to yield the immediate precursors to the large and small rRNAs (23S and 16S). Processes some mRNAs, and tRNAs when they are encoded in the rRNA operon. Processes pre-crRNA and tracrRNA of type II CRISPR loci if present in the organism. In Blochmanniella floridana, this protein is Ribonuclease 3.